The sequence spans 418 residues: Glutamyl-tRNA reductase (418 aa).

Substrate-binding positions include 51 to 54, Ser-107, 112 to 114, and Gln-118; these read TCNR and EPQ. The Nucleophile role is filled by Cys-52. 187–192 lines the NADP(+) pocket; sequence GAGETA.

The protein belongs to the glutamyl-tRNA reductase family. Homodimer.

It catalyses the reaction (S)-4-amino-5-oxopentanoate + tRNA(Glu) + NADP(+) = L-glutamyl-tRNA(Glu) + NADPH + H(+). The protein operates within porphyrin-containing compound metabolism; protoporphyrin-IX biosynthesis; 5-aminolevulinate from L-glutamyl-tRNA(Glu): step 1/2. Functionally, catalyzes the NADPH-dependent reduction of glutamyl-tRNA(Glu) to glutamate 1-semialdehyde (GSA). The sequence is that of Glutamyl-tRNA reductase from Dichelobacter nodosus (strain VCS1703A).